Consider the following 239-residue polypeptide: Probable transcriptional regulatory protein ACL_0044 (239 aa).

This sequence belongs to the TACO1 family.

It localises to the cytoplasm. The protein is Probable transcriptional regulatory protein ACL_0044 of Acholeplasma laidlawii (strain PG-8A).